A 268-amino-acid chain; its full sequence is tRNA pseudouridine synthase A (268 aa).

Residue Asp-63 is the Nucleophile of the active site. Tyr-122 is a substrate binding site.

This sequence belongs to the tRNA pseudouridine synthase TruA family. Homodimer.

It catalyses the reaction uridine(38/39/40) in tRNA = pseudouridine(38/39/40) in tRNA. Functionally, formation of pseudouridine at positions 38, 39 and 40 in the anticodon stem and loop of transfer RNAs. In Treponema denticola (strain ATCC 35405 / DSM 14222 / CIP 103919 / JCM 8153 / KCTC 15104), this protein is tRNA pseudouridine synthase A.